Here is a 245-residue protein sequence, read N- to C-terminus: Deoxyadenosine kinase (245 aa).

Residue 28–36 (GLIGAGKTT) participates in ATP binding. Residues E52, Y64, and Q75 each contribute to the substrate site. The active-site Proton acceptor is D99. The substrate site is built by R100, D105, and E165.

The protein belongs to the DCK/DGK family.

The enzyme catalyses 2'-deoxyadenosine + ATP = dAMP + ADP + H(+). In terms of biological role, specific kinase that phosphorylates deoxyadenosine but not any other deoxyribonucleoside, as part of the deoxyribonucleotide salvage pathway. The protein is Deoxyadenosine kinase (dak) of Dictyostelium discoideum (Social amoeba).